Consider the following 377-residue polypeptide: CaM kinase-like vesicle-associated protein (377 aa).

A Protein kinase domain is found at 24–287 (YDLGQLIKTE…AADAISHEWI (264 aa)). Residues 324 to 377 (MKRLRAPEQTDPGTPSPSKDSDKTPSMATPAPSPANTPAEGAPSLPCPSPDTTG) are disordered. Residues 347-362 (TPSMATPAPSPANTPA) show a composition bias toward low complexity. Residues 368–377 (LPCPSPDTTG) show a composition bias toward pro residues.

Belongs to the protein kinase superfamily. CAMK Ser/Thr protein kinase family. Interacts with calmodulin, in the presence of calcium. The cofactor is Ca(2+).

The protein localises to the cytoplasmic vesicle membrane. Does not appear to have detectable kinase activity. The sequence is that of CaM kinase-like vesicle-associated protein (camkv) from Xenopus laevis (African clawed frog).